The chain runs to 370 residues: D-alanine--D-alanine ligase (370 aa).

The region spanning Lys142–Gln348 is the ATP-grasp domain. Gln172 to Val227 provides a ligand contact to ATP. Mg(2+) contacts are provided by Asp302, Glu315, and Asn317.

This sequence belongs to the D-alanine--D-alanine ligase family. Requires Mg(2+) as cofactor. Mn(2+) is required as a cofactor.

The protein localises to the cytoplasm. The enzyme catalyses 2 D-alanine + ATP = D-alanyl-D-alanine + ADP + phosphate + H(+). It functions in the pathway cell wall biogenesis; peptidoglycan biosynthesis. Functionally, cell wall formation. In Lactiplantibacillus plantarum (strain ATCC BAA-793 / NCIMB 8826 / WCFS1) (Lactobacillus plantarum), this protein is D-alanine--D-alanine ligase.